The chain runs to 441 residues: Ribosomal protein uS12 methylthiotransferase RimO (441 aa).

Residues 5–116 form the MTTase N-terminal domain; it reads PTIAFTHLGC…IVDVMQRVEK (112 aa). C14, C50, C79, C154, C158, and C161 together coordinate [4Fe-4S] cluster. The region spanning 140–370 is the Radical SAM core domain; it reads TTSEGVAYVR…EVQQSISWQQ (231 aa). The 67-residue stretch at 372–438 folds into the TRAM domain; the sequence is QKLVGQLVDV…IYDLYGCLIS (67 aa).

The protein belongs to the methylthiotransferase family. RimO subfamily. The cofactor is [4Fe-4S] cluster.

It localises to the cytoplasm. The enzyme catalyses L-aspartate(89)-[ribosomal protein uS12]-hydrogen + (sulfur carrier)-SH + AH2 + 2 S-adenosyl-L-methionine = 3-methylsulfanyl-L-aspartate(89)-[ribosomal protein uS12]-hydrogen + (sulfur carrier)-H + 5'-deoxyadenosine + L-methionine + A + S-adenosyl-L-homocysteine + 2 H(+). Functionally, catalyzes the methylthiolation of an aspartic acid residue of ribosomal protein uS12. This Trichodesmium erythraeum (strain IMS101) protein is Ribosomal protein uS12 methylthiotransferase RimO.